A 317-amino-acid chain; its full sequence is Cytochrome f (317 aa).

The N-terminal stretch at 1 to 34 is a signal peptide; that stretch reads MKGLKNQIMKKTSLFICTLLFILSIVFYPKITFA. Residues Tyr35, Cys55, Cys58, and His59 each coordinate heme. The chain crosses the membrane as a helical span at residues 284–304; that stretch reads VIGLIAFFIGVGLTQILLVLK.

Belongs to the cytochrome f family. In terms of assembly, the 4 large subunits of the cytochrome b6-f complex are cytochrome b6, subunit IV (17 kDa polypeptide, PetD), cytochrome f and the Rieske protein, while the 4 small subunits are PetG, PetL, PetM and PetN. The complex functions as a dimer. Heme is required as a cofactor.

The protein localises to the cellular thylakoid membrane. In terms of biological role, component of the cytochrome b6-f complex, which mediates electron transfer between photosystem II (PSII) and photosystem I (PSI), cyclic electron flow around PSI, and state transitions. The sequence is that of Cytochrome f from Prochlorococcus marinus (strain MIT 9215).